Reading from the N-terminus, the 646-residue chain is Long-chain fatty acid transport protein 1 (646 aa).

The Extracellular portion of the chain corresponds to 1–13 (MRAPGAGAASVVS). The chain crosses the membrane as a helical span at residues 14–34 (LALLWLLGLPWTWSAAAALGV). Residues 35-646 (YVGSGGWRFL…TRICSGAFAL (612 aa)) are Cytoplasmic-facing. Positions 191-475 (EVSGHLGKSL…YVSESATSKK (285 aa)) are sufficient for oligomerization. Residue 246-257 (YIYTSGTTGLPK) participates in AMP binding.

Belongs to the ATP-dependent AMP-binding enzyme family. In terms of assembly, self-associates. May function as a homodimer. Interacts with EPRS1; mediates the translocation of SLC27A1 from the cytoplasm to the plasma membrane thereby increasing the uptake of long-chain fatty acids. Interacts with DGAT2 and this interaction is enhanced in the presence of ZFYVE1. Highest levels of expression are detected in muscle and adipose tissue small, intermediate levels in small intestine, and barely detectable in liver. Expressed in brain gray matter.

It is found in the cell membrane. Its subcellular location is the endomembrane system. The protein localises to the cytoplasm. The enzyme catalyses a fatty acid(in) = a fatty acid(out). It carries out the reaction (9Z)-octadecenoate(out) = (9Z)-octadecenoate(in). It catalyses the reaction hexadecanoate(out) = hexadecanoate(in). The catalysed reaction is (9Z,12Z)-octadecadienoate(out) = (9Z,12Z)-octadecadienoate(in). The enzyme catalyses (5Z,8Z,11Z,14Z)-eicosatetraenoate(out) = (5Z,8Z,11Z,14Z)-eicosatetraenoate(in). It carries out the reaction a long-chain fatty acid + ATP + CoA = a long-chain fatty acyl-CoA + AMP + diphosphate. It catalyses the reaction (5Z,8Z,11Z,14Z)-eicosatetraenoate + ATP + CoA = (5Z,8Z,11Z,14Z)-eicosatetraenoyl-CoA + AMP + diphosphate. The catalysed reaction is a very long-chain fatty acid + ATP + CoA = a very long-chain fatty acyl-CoA + AMP + diphosphate. The enzyme catalyses tetracosanoate + ATP + CoA = tetracosanoyl-CoA + AMP + diphosphate. Its activity is regulated as follows. Inhibited by Triacsin C. Its function is as follows. Mediates the import of long-chain fatty acids (LCFA) into the cell by facilitating their transport at the plasma membrane. Also functions as an acyl-CoA ligase catalyzing the ATP-dependent formation of fatty acyl-CoA using LCFA and very-long-chain fatty acids (VLCFA) as substrates, which prevents fatty acid efflux from cells and might drive more fatty acid uptake. May act directly as a bona fide transporter, or alternatively, in a cytoplasmic or membrane-associated multimeric protein complex to trap and draw fatty acids towards accumulation. Plays a pivotal role in regulating available LCFA substrates from exogenous sources in tissues undergoing high levels of beta-oxidation or triglyceride synthesis. May be involved in regulation of cholesterol metabolism. Probably involved in fatty acid transport across the blood barrier. The chain is Long-chain fatty acid transport protein 1 from Homo sapiens (Human).